Reading from the N-terminus, the 523-residue chain is MKSRFLLKIFIFLAVFGVDSVRAADCTEKTFKTGTVCVCSLDSCDEIPPLDITMGQAALYTTSHTGARLHRDVIYATDTEPFGTLHMTIDSSKKYQTIQGFGSTFSDASGANLKSLPDKLSDLIMKQYFSDTGLNLQFGRVPIASTDFSGRVYSYNDVANDYSMQNFNLTKEDFQWKIPYIKNAQKYNPNLKLFAAPWAAPGWLKTTKEMTGPGALNGKAGDNYHQAYAKYFVRFLEEYGKSGISFWGLSTQNQPTLGSDKKNKIQSTLFTAETQRDFIKTDLGPALAASSSGKDVKLLILDDNRGNLPKWADTVLNDMDAAKYVGGIGVHAYQDGETDNHLDETHKKHPNFFILGTEASEGYGSKDTHVDYGNWDRAADTASDILDNMNNWMTGWTERNLILDALGGPSWVSDYTDAPVIAFPAMAQFYKQPMFYAIAHFSHFIKPGAVRIDHSLNVIELEVETTAFLNPDGSKVIVMLNKGSLVSTEHTVVVQDAADSRNHYHFTLPHRAITTLYIQTSQF.

The signal sequence occupies residues 1–23 (MKSRFLLKIFIFLAVFGVDSVRA). Asn-168 carries N-linked (GlcNAc...) asparagine glycosylation. Catalysis depends on Glu-358, which acts as the Nucleophile.

The protein belongs to the glycosyl hydrolase 30 family.

The enzyme catalyses a beta-D-glucosylceramide + H2O = an N-acyl-sphingoid base + D-glucose. It carries out the reaction a beta-D-glucosyl-(1&lt;-&gt;1')-N-acylsphing-4-enine + H2O = an N-acylsphing-4-enine + D-glucose. It catalyses the reaction an N-acyl-1-beta-D-glucosyl-15-methylhexadecasphing-4-enine + H2O = an N-acyl-15-methylhexadecasphing-4-enine + D-glucose. It participates in lipid metabolism; sphingolipid metabolism. Functionally, glucosylceramidase that catalyzes the hydrolysis of glucosylceramides into free ceramides and glucose. C.elegans contains specific sphingoid bases, which are unique or different in structure compared to the sphingoid bases found in other animals. Two examples of these distinctive compounds are: 15-methylhexadecasphinganine and 15-methylhexadecasphing-4-enine. The polypeptide is Putative glucosylceramidase 1 (gba-1) (Caenorhabditis elegans).